The sequence spans 201 residues: Small ribosomal subunit protein uS4 (201 aa).

One can recognise an S4 RNA-binding domain in the interval R93–V156.

This sequence belongs to the universal ribosomal protein uS4 family. Part of the 30S ribosomal subunit. Contacts protein S5. The interaction surface between S4 and S5 is involved in control of translational fidelity.

One of the primary rRNA binding proteins, it binds directly to 16S rRNA where it nucleates assembly of the body of the 30S subunit. In terms of biological role, with S5 and S12 plays an important role in translational accuracy. This is Small ribosomal subunit protein uS4 from Limosilactobacillus reuteri subsp. reuteri (strain JCM 1112) (Lactobacillus reuteri).